An 810-amino-acid chain; its full sequence is MPMDVILVLWFCVCTARTVLGFGMDPDLQMDIITELDLVNTTLGVTQVAGLHNASKAFLFQDVQREIHSAPHVSEKLIQLFRNKSEFTFLATVQQKPSTSGVILSIRELEHSYFELESSGPREEIRYHYIHGGKPRTEALPYRMADGQWHKVALSVSASHLLLHVDCNRIYERVIDPPETNLPPGSNLWLGQRNQKHGFFKGIIQDGKIIFMPNGFITQCPNLNRTCPTCSDFLSLVQGIMDLQELLAKMTAKLNYAETRLGQLENCHCEKTCQVSGLLYRDQDSWVDGDNCRNCTCKSGAVECRRMSCPPLNCSPDSLPVHISGQCCKVCRPKCIYGGKVLAEGQRILTKTCRECRGGVLVKITEACPPLNCSEKDHILPENQCCRVCRGHNFCAEAPKCGENSECKNWNTKATCECKNGYISVQGNSAYCEDIDECAAKMHYCHANTVCVNLPGLYRCDCIPGYIRVDDFSCTEHDDCGSGQHNCDKNAICTNTVQGHSCTCQPGYVGNGTVCKAFCEEGCRYGGTCVAPNKCVCPSGFTGSHCEKDIDECAEGFVECHNHSRCVNLPGWYHCECRSGFHDDGTYSLSGESCIDIDECALRTHTCWNDSACINLAGGFDCLCPSGPSCSGDCPHEGGLKHNGQVWILREDRCSVCSCKDGKIFCRRTACDCQNPNVDLFCCPECDTRVTSQCLDQSGQKLYRSGDNWTHSCQQCRCLEGEADCWPLACPSLSCEYTAIFEGECCPRCVSDPCLADNIAYDIRKTCLDSSGISRLSGAVWTMAGSPCTTCQCKNGRVCCSVDLVCLENN.

A signal peptide spans 1–21 (MPMDVILVLWFCVCTARTVLG). Asn-40, Asn-53, Asn-83, Asn-224, Asn-294, and Asn-372 each carry an N-linked (GlcNAc...) asparagine glycan. The 171-residue stretch at 57-227 (AFLFQDVQRE…TQCPNLNRTC (171 aa)) folds into the Laminin G-like domain. Residues 271 to 332 (KTCQVSGLLY…ISGQCCKVCR (62 aa)) form the VWFC 1 domain. 3 disulfide bridges follow: Cys-395–Cys-407, Cys-401–Cys-416, and Cys-418–Cys-432. The Ca(2+) site is built by Asp-434, Ile-435, and Glu-437. Residues 434 to 475 (DIDECAAKMHYCHANTVCVNLPGLYRCDCIPGYIRVDDFSCT) form the EGF-like 1; calcium-binding domain. Cystine bridges form between Cys-438/Cys-451, Cys-445/Cys-460, Cys-462/Cys-474, Cys-480/Cys-493, Cys-487/Cys-502, Cys-504/Cys-515, Cys-519/Cys-529, Cys-523/Cys-535, Cys-537/Cys-546, Cys-553/Cys-566, Cys-560/Cys-575, Cys-577/Cys-594, Cys-600/Cys-613, Cys-607/Cys-622, and Cys-624/Cys-630. Residues Asn-453, Leu-454, and Leu-457 each contribute to the Ca(2+) site. In terms of domain architecture, EGF-like 2; calcium-binding spans 476 to 516 (EHDDCGSGQHNCDKNAICTNTVQGHSCTCQPGYVGNGTVCK). N-linked (GlcNAc...) asparagine glycosylation is present at Asn-511. The 31-residue stretch at 517–547 (AFCEEGCRYGGTCVAPNKCVCPSGFTGSHCE) folds into the EGF-like 3 domain. The EGF-like 4; calcium-binding domain maps to 549-587 (DIDECAEGFVECHNHSRCVNLPGWYHCECRSGFHDDGTY). Asn-562 carries N-linked (GlcNAc...) asparagine glycosylation. The 36-residue stretch at 596-631 (DIDECALRTHTCWNDSACINLAGGFDCLCPSGPSCS) folds into the EGF-like 5; calcium-binding domain. N-linked (GlcNAc...) asparagine glycosylation occurs at Asn-609. VWFC domains lie at 632 to 687 (GDCP…PECD) and 692 to 750 (SQCL…PRCV). Residue Asn-708 is glycosylated (N-linked (GlcNAc...) asparagine).

Homotrimer. Binds to PKC beta-1. Interacts with ATRAID; the interaction promotes osteoblast cell differentiation and mineralization. Interacts with ROBO3.

Its subcellular location is the cytoplasm. The protein localises to the nucleus envelope. The protein resides in the secreted. Plays a role in the control of cell growth and differentiation. Promotes osteoblast cell differentiation and terminal mineralization. The polypeptide is Protein kinase C-binding protein NELL1 (Nell1) (Mus musculus (Mouse)).